Here is a 464-residue protein sequence, read N- to C-terminus: Agamous-like MADS-box protein AGL92 (464 aa).

The MADS-box domain occupies 1–60 (MRTKTKLVLIPDRHFRRATFRKRNAGIRKKLHELTTLCDIKACAVIYSPFENPTVWPSTE). Positions 85–114 (ETFLRDQITKEQNKLESLRRENRETQLKHF) form a coiled coil. The tract at residues 443 to 464 (TSTGHMPSTTTTTTNNNNNNNV) is disordered. Residues 451–464 (TTTTTTNNNNNNNV) show a composition bias toward low complexity.

Interacts with AGL62.

The protein resides in the nucleus. In terms of biological role, putative transcription factor. The chain is Agamous-like MADS-box protein AGL92 (AGL92) from Arabidopsis thaliana (Mouse-ear cress).